We begin with the raw amino-acid sequence, 218 residues long: Radial spoke head 1 homolog (218 aa).

The segment covering 1–13 (MSDAGTEEFDEEQ) has biased composition (acidic residues). Residues 1-48 (MSDAGTEEFDEEQGSLGEYEGDRNEAGERHGQGKAVLPRGDTYQGAYE) are disordered. 6 MORN repeats span residues 19–42 (YEGDRNEAGERHGQGKAVLPRGDT), 43–65 (YQGAYENGKRCGQGTYKFKNGAR), 66–88 (YTGEWYMNLKHGQGVLYYPDGSK), 89–111 (YEGSWVDDQRQGHGVYTYPNGDT), 112–134 (YDGEWLHHQRHGQGTYTHQETGS), and 158–180 (YHGNFVNNNPSGPGKYVFDIGCE). Residues 20-31 (EGDRNEAGERHG) are compositionally biased toward basic and acidic residues.

In terms of assembly, component of the axonemal radial spoke complexes. Interacts with septin SEPT7. As to expression, testis-specific.

Its subcellular location is the cytoplasm. It localises to the cytoskeleton. It is found in the cilium axoneme. The protein resides in the flagellum basal body. The protein localises to the flagellum axoneme. Its function is as follows. Functions as part of axonemal radial spoke complexes that play an important part in the motility of sperm and cilia. The protein is Radial spoke head 1 homolog (rsph1) of Cyprinus carpio (Common carp).